The primary structure comprises 264 residues: Apolipoprotein A-I (264 aa).

The N-terminal stretch at 1–18 (MKAVLLVVAALFLAGSQA) is a signal peptide. 2 consecutive repeat copies span residues 67–88 (LRLS…ADFG) and 89–110 (LATQ…QIVS). The interval 67–264 (LRLSDNWDTL…DQASKQLAAQ (198 aa)) is 10 X approximate tandem repeats. Residues 111–121 (EDLQDVKHKVQ) form a 3; half-length repeat. A run of 5 repeats spans residues 122–143 (PYLE…EKVR), 144–165 (PLGI…EKLT), 166–187 (PLGE…TQLA), 188–207 (PFSE…LKDS), and 208–229 (ATLA…EKAK). Met193 bears the Methionine sulfoxide mark. One copy of the 9; half-length repeat lies at 230–240 (PALEDLRQGLL). Repeat unit 10 spans residues 241–264 (PVLENLKASILSSIDQASKQLAAQ).

This sequence belongs to the apolipoprotein A1/A4/E family. As to quaternary structure, homodimer. Interacts with APOA1BP and CLU. Component of a sperm activating protein complex (SPAP), consisting of APOA1, an immunoglobulin heavy chain, an immunoglobulin light chain and albumin. Interacts with NDRG1. Interacts with SCGB3A2. Interacts with NAXE and YJEFN3. In terms of processing, glycosylated. Palmitoylated. Post-translationally, phosphorylation sites are present in the extracellular medium.

It localises to the secreted. Its function is as follows. Participates in the reverse transport of cholesterol from tissues to the liver for excretion by promoting cholesterol efflux from tissues and by acting as a cofactor for the lecithin cholesterol acyltransferase (LCAT). As part of the SPAP complex, activates spermatozoa motility. The protein is Apolipoprotein A-I (APOA1) of Cavia porcellus (Guinea pig).